We begin with the raw amino-acid sequence, 178 residues long: ATP-dependent protease subunit HslV (178 aa).

The active site involves Thr7. Residues Gly162, Cys165, and Thr168 each coordinate Na(+).

Belongs to the peptidase T1B family. HslV subfamily. A double ring-shaped homohexamer of HslV is capped on each side by a ring-shaped HslU homohexamer. The assembly of the HslU/HslV complex is dependent on binding of ATP.

It is found in the cytoplasm. The catalysed reaction is ATP-dependent cleavage of peptide bonds with broad specificity.. Its activity is regulated as follows. Allosterically activated by HslU binding. In terms of biological role, protease subunit of a proteasome-like degradation complex believed to be a general protein degrading machinery. The polypeptide is ATP-dependent protease subunit HslV (Burkholderia vietnamiensis (strain G4 / LMG 22486) (Burkholderia cepacia (strain R1808))).